The chain runs to 123 residues: 1,4-dihydroxy-2-naphthoyl-CoA hydrolase (123 aa).

Catalysis depends on Glu-46, which acts as the Nucleophile or proton acceptor.

The protein belongs to the thioesterase PaaI family.

It catalyses the reaction 1,4-dihydroxy-2-naphthoyl-CoA + H2O = 1,4-dihydroxy-2-naphthoate + CoA + H(+). It participates in quinol/quinone metabolism; menaquinone biosynthesis. In terms of biological role, catalyzes the hydrolysis of 1,4-dihydroxy-2-naphthoyl-CoA (DHNA-CoA) to 1,4-dihydroxy-2-naphthoate (DHNA) and free coenzyme A. Production of DHNA is required for protection against bacteriolysis in the cytosol of macrophages and tissue-specific virulence in vivo, suggesting that MenI is required to protect the bacteria from killing in the macrophage cytosol. The protein is 1,4-dihydroxy-2-naphthoyl-CoA hydrolase of Listeria monocytogenes serotype 1/2a (strain 10403S).